Consider the following 290-residue polypeptide: Glycine--tRNA ligase alpha subunit (290 aa).

This sequence belongs to the class-II aminoacyl-tRNA synthetase family. In terms of assembly, tetramer of two alpha and two beta subunits.

It localises to the cytoplasm. It carries out the reaction tRNA(Gly) + glycine + ATP = glycyl-tRNA(Gly) + AMP + diphosphate. The protein is Glycine--tRNA ligase alpha subunit of Syntrophotalea carbinolica (strain DSM 2380 / NBRC 103641 / GraBd1) (Pelobacter carbinolicus).